Here is a 259-residue protein sequence, read N- to C-terminus: Global transcriptional regulator CodY (259 aa).

The tract at residues 1–155 (MELLAKTRKL…SSTVVGMEIL (155 aa)) is GAF domain. Positions 203-222 (ASKIADRVGITRSVIVNALR) form a DNA-binding region, H-T-H motif. Phosphoserine is present on S215.

This sequence belongs to the CodY family.

The protein resides in the cytoplasm. In terms of biological role, DNA-binding global transcriptional regulator which is involved in the adaptive response to starvation and acts by directly or indirectly controlling the expression of numerous genes in response to nutrient availability. During rapid exponential growth, CodY is highly active and represses genes whose products allow adaptation to nutrient depletion. This Bacillus mycoides (strain KBAB4) (Bacillus weihenstephanensis) protein is Global transcriptional regulator CodY.